Consider the following 80-residue polypeptide: MARKKTLDFEQSLTELQTLVERLESGELSLEESLGAFEQGIRLTRECQTSLSQAEQKVQILLERDGELSEAPFDAEGDEA.

Belongs to the XseB family. In terms of assembly, heterooligomer composed of large and small subunits.

The protein resides in the cytoplasm. The enzyme catalyses Exonucleolytic cleavage in either 5'- to 3'- or 3'- to 5'-direction to yield nucleoside 5'-phosphates.. Functionally, bidirectionally degrades single-stranded DNA into large acid-insoluble oligonucleotides, which are then degraded further into small acid-soluble oligonucleotides. In Pseudomonas aeruginosa (strain LESB58), this protein is Exodeoxyribonuclease 7 small subunit.